The sequence spans 376 residues: tRNA (guanine(26)-N(2))-dimethyltransferase (376 aa).

Residues 4–373 enclose the Trm1 methyltransferase domain; that stretch reads VAVKEGLARI…APFGVVAEVM (370 aa). Residues Arg36, Arg61, Asp78, Asp120, and Ala121 each contribute to the S-adenosyl-L-methionine site.

It belongs to the class I-like SAM-binding methyltransferase superfamily. Trm1 family.

It catalyses the reaction guanosine(26) in tRNA + 2 S-adenosyl-L-methionine = N(2)-dimethylguanosine(26) in tRNA + 2 S-adenosyl-L-homocysteine + 2 H(+). Functionally, dimethylates a single guanine residue at position 26 of a number of tRNAs using S-adenosyl-L-methionine as donor of the methyl groups. The sequence is that of tRNA (guanine(26)-N(2))-dimethyltransferase from Thermococcus kodakarensis (strain ATCC BAA-918 / JCM 12380 / KOD1) (Pyrococcus kodakaraensis (strain KOD1)).